The chain runs to 638 residues: 3D-(3,5/4)-trihydroxycyclohexane-1,2-dione hydrolase (638 aa).

Residue Glu-67 coordinates thiamine diphosphate. Positions 442 to 523 (SLPGDLQRLW…INIMLFDNSG (82 aa)) are thiamine pyrophosphate binding. Mg(2+)-binding residues include Asp-494 and Asn-521.

Belongs to the TPP enzyme family. Mg(2+) is required as a cofactor. Thiamine diphosphate serves as cofactor.

The enzyme catalyses 3D-3,5/4-trihydroxycyclohexane-1,2-dione + H2O = 5-deoxy-D-glucuronate + H(+). It participates in polyol metabolism; myo-inositol degradation into acetyl-CoA; acetyl-CoA from myo-inositol: step 3/7. Functionally, involved in the cleavage of the C1-C2 bond of 3D-(3,5/4)-trihydroxycyclohexane-1,2-dione (THcHDO) to yield 5-deoxy-glucuronate (5DG). The sequence is that of 3D-(3,5/4)-trihydroxycyclohexane-1,2-dione hydrolase from Listeria monocytogenes serotype 4b (strain F2365).